Reading from the N-terminus, the 268-residue chain is Probable 1-acyl-sn-glycerol-3-phosphate acyltransferase (268 aa).

An HXXXXD motif motif is present at residues H92–D97.

Belongs to the 1-acyl-sn-glycerol-3-phosphate acyltransferase family.

The catalysed reaction is a 1-acyl-sn-glycero-3-phosphate + an acyl-CoA = a 1,2-diacyl-sn-glycero-3-phosphate + CoA. It functions in the pathway phospholipid metabolism; CDP-diacylglycerol biosynthesis; CDP-diacylglycerol from sn-glycerol 3-phosphate: step 2/3. In terms of biological role, converts lysophosphatidic acid (LPA) into phosphatidic acid by incorporating acyl moiety at the 2 position. The polypeptide is Probable 1-acyl-sn-glycerol-3-phosphate acyltransferase (plsC) (Mycoplasma genitalium (strain ATCC 33530 / DSM 19775 / NCTC 10195 / G37) (Mycoplasmoides genitalium)).